The primary structure comprises 355 residues: Guanine nucleotide-binding protein subunit alpha-14 (355 aa).

The G-alpha domain occupies 34–355; that stretch reads RELKLLLLGT…QLNLREFNLV (322 aa). A G1 motif region spans residues 37–50; sequence KLLLLGTGESGKST. GTP-binding positions include 42 to 49, 176 to 182, 201 to 205, 270 to 273, and alanine 327; these read GTGESGKS, LRVRVPT, DVGGQ, and NKKD. Serine 49 lines the Mg(2+) pocket. Residues 174–182 form a G2 motif region; it reads DVLRVRVPT. Arginine 179 carries the ADP-ribosylarginine; by cholera toxin modification. Threonine 182 provides a ligand contact to Mg(2+). A G3 motif region spans residues 197–206; that stretch reads FRMVDVGGQR. Positions 266 to 273 are G4 motif; that stretch reads ILFLNKKD. The interval 325–330 is G5 motif; sequence TCATDT.

The protein belongs to the G-alpha family. G(q) subfamily. G proteins are composed of 3 units; alpha, beta and gamma. The alpha chain contains the guanine nucleotide binding site.

In terms of biological role, guanine nucleotide-binding proteins (G proteins) are involved as modulators or transducers in various transmembrane signaling systems. The protein is Guanine nucleotide-binding protein subunit alpha-14 (GNA14) of Homo sapiens (Human).